A 280-amino-acid chain; its full sequence is Putative pyruvate, phosphate dikinase regulatory protein (280 aa).

153 to 160 (GISRTSKT) contacts ADP.

Belongs to the pyruvate, phosphate/water dikinase regulatory protein family. PDRP subfamily.

It carries out the reaction N(tele)-phospho-L-histidyl/L-threonyl-[pyruvate, phosphate dikinase] + ADP = N(tele)-phospho-L-histidyl/O-phospho-L-threonyl-[pyruvate, phosphate dikinase] + AMP + H(+). The catalysed reaction is N(tele)-phospho-L-histidyl/O-phospho-L-threonyl-[pyruvate, phosphate dikinase] + phosphate + H(+) = N(tele)-phospho-L-histidyl/L-threonyl-[pyruvate, phosphate dikinase] + diphosphate. Its function is as follows. Bifunctional serine/threonine kinase and phosphorylase involved in the regulation of the pyruvate, phosphate dikinase (PPDK) by catalyzing its phosphorylation/dephosphorylation. This is Putative pyruvate, phosphate dikinase regulatory protein from Bartonella quintana (strain Toulouse) (Rochalimaea quintana).